Here is a 225-residue protein sequence, read N- to C-terminus: MAIKDWPEGEGPRDKLLVKGAAHLSDAELLAVLLRNGLSGLNAVDLARSLIQEFGGLRSLLCAPKHQVCRLPGVGPVKYAQLQAAAELARRVAQENLQRGQVLTNPDLTRDYLMRQLADRSYEVFAILLLDSQHRVIQFVELFRGTIDSASVYPREVVSLVLEKKAAAVIVCHNHPSGIAEPSQADRRITERLKNALATIDVSLLDHMVVGDREIVSFAERGWIN.

An MPN domain is found at 102–224 (VLTNPDLTRD…IVSFAERGWI (123 aa)). Zn(2+) contacts are provided by H173, H175, and D186. Positions 173 to 186 (HNHPSGIAEPSQAD) match the JAMM motif motif.

It belongs to the UPF0758 family.

The protein is UPF0758 protein Shewmr4_3597 of Shewanella sp. (strain MR-4).